A 126-amino-acid polypeptide reads, in one-letter code: Small ribosomal subunit protein uS13c (126 aa).

The segment at Gly-95–Lys-126 is disordered. The span at Ala-107 to Lys-126 shows a compositional bias: basic residues.

The protein belongs to the universal ribosomal protein uS13 family. In terms of assembly, part of the 30S ribosomal subunit.

The protein resides in the plastid. It is found in the chloroplast. Located at the top of the head of the 30S subunit, it contacts several helices of the 16S rRNA. The sequence is that of Small ribosomal subunit protein uS13c from Gracilaria tenuistipitata var. liui (Red alga).